We begin with the raw amino-acid sequence, 504 residues long: Dimethylsulfoniopropionate lyase 5 (504 aa).

Belongs to the aspartate/glutamate racemases family. ALMA1 subfamily. As to quaternary structure, homotetramer.

The catalysed reaction is S,S-dimethyl-beta-propiothetin = acrylate + dimethyl sulfide + H(+). Mediates cleavage of dimethylsulfoniopropionate (DMSP) into dimethyl sulfide (DMS) and acrylate. DMS is the principal form by which sulfur is transported from oceans to the atmosphere and is a key component of the ocean sulfur cycle. This chain is Dimethylsulfoniopropionate lyase 5, found in Emiliania huxleyi (strain CCMP1516).